A 220-amino-acid chain; its full sequence is uncharacterized protein (220 aa).

A disordered region spans residues 194–220 (DQSQQQATKSNSKTKKLKGNHGEKTKI). Polar residues predominate over residues 195-204 (QSQQQATKSN).

This is an uncharacterized protein from Borreliella burgdorferi (strain ATCC 35210 / DSM 4680 / CIP 102532 / B31) (Borrelia burgdorferi).